A 488-amino-acid polypeptide reads, in one-letter code: Probable glycine dehydrogenase (decarboxylating) subunit 2 (488 aa).

Position 274 is an N6-(pyridoxal phosphate)lysine (K274).

Belongs to the GcvP family. C-terminal subunit subfamily. As to quaternary structure, the glycine cleavage system is composed of four proteins: P, T, L and H. In this organism, the P 'protein' is a heterodimer of two subunits. Pyridoxal 5'-phosphate serves as cofactor.

The catalysed reaction is N(6)-[(R)-lipoyl]-L-lysyl-[glycine-cleavage complex H protein] + glycine + H(+) = N(6)-[(R)-S(8)-aminomethyldihydrolipoyl]-L-lysyl-[glycine-cleavage complex H protein] + CO2. The glycine cleavage system catalyzes the degradation of glycine. The P protein binds the alpha-amino group of glycine through its pyridoxal phosphate cofactor; CO(2) is released and the remaining methylamine moiety is then transferred to the lipoamide cofactor of the H protein. This is Probable glycine dehydrogenase (decarboxylating) subunit 2 from Listeria monocytogenes serovar 1/2a (strain ATCC BAA-679 / EGD-e).